The primary structure comprises 344 residues: MKAMLLHKFGEPLRLEDMDVPKVGVGQVLVKVDYAGVCHTDLSVRSGAIFNRISSSKPTLPLVIGHEIAGEVVELGGNVEGFKKSDKVLIDPWIGDGSCHYCKIGEDQYCDNPKWLGINVNGGYGEYVLVPDYRYMFKLRNLSTSTASPLACSGVTAYRALRLANLDPSKSVMIIGAGGGLGSIAVQIAKAIHGSFIIGVDVSEEGLKLATNLGADYVTSKVDEEEVRKITTGRGVDAIIDFVGSEFTTSNYYTLLAKLGRYVKVGTYGGGLPHDAGLRLHSMGWQFIGTLTGNRKDFLEVLELAENGKIKPMITKVLSLEEANDALDNLEKGKVSGRQVLKVT.

Positions 38, 66, 96, 99, 102, 110, and 152 each coordinate Zn(2+).

This sequence belongs to the zinc-containing alcohol dehydrogenase family. As to quaternary structure, homodimer and homotetramer. Requires Zn(2+) as cofactor.

The enzyme catalyses a primary alcohol + NAD(+) = an aldehyde + NADH + H(+). It carries out the reaction a secondary alcohol + NAD(+) = a ketone + NADH + H(+). This chain is NAD-dependent alcohol dehydrogenase (adh), found in Sulfolobus acidocaldarius (strain ATCC 33909 / DSM 639 / JCM 8929 / NBRC 15157 / NCIMB 11770).